Reading from the N-terminus, the 291-residue chain is F-box/kelch-repeat protein At5g38670 (291 aa).

The 47-residue stretch at 5-51 (TNPNPSLPDDLILSCVARVSRLYYPALSLVSKSFRSLIASPELYKTR) folds into the F-box domain. Kelch repeat units lie at residues 46-91 (ELYK…VLDE), 92-140 (KIYV…RFDG), 142-187 (LHLV…WYTI), and 189-232 (KGDI…YGGK).

The polypeptide is F-box/kelch-repeat protein At5g38670 (Arabidopsis thaliana (Mouse-ear cress)).